Here is a 360-residue protein sequence, read N- to C-terminus: Phospho-N-acetylmuramoyl-pentapeptide-transferase (360 aa).

The next 10 helical transmembrane spans lie at 26 to 46 (AIVS…RMIA), 72 to 92 (PTMG…LWAY), 94 to 114 (SNPY…VGFV), 132 to 152 (WKYF…YMIG), 168 to 188 (VMPQ…VGTS), 199 to 219 (GLAI…AWAT), 236 to 256 (AGEL…FLWF), 263 to 283 (VFMG…IAVL), 288 to 308 (FLLV…ILQV), and 338 to 358 (VIVR…ATLK).

It belongs to the glycosyltransferase 4 family. MraY subfamily. Mg(2+) is required as a cofactor.

It localises to the cell inner membrane. It catalyses the reaction UDP-N-acetyl-alpha-D-muramoyl-L-alanyl-gamma-D-glutamyl-meso-2,6-diaminopimeloyl-D-alanyl-D-alanine + di-trans,octa-cis-undecaprenyl phosphate = di-trans,octa-cis-undecaprenyl diphospho-N-acetyl-alpha-D-muramoyl-L-alanyl-D-glutamyl-meso-2,6-diaminopimeloyl-D-alanyl-D-alanine + UMP. It participates in cell wall biogenesis; peptidoglycan biosynthesis. Functionally, catalyzes the initial step of the lipid cycle reactions in the biosynthesis of the cell wall peptidoglycan: transfers peptidoglycan precursor phospho-MurNAc-pentapeptide from UDP-MurNAc-pentapeptide onto the lipid carrier undecaprenyl phosphate, yielding undecaprenyl-pyrophosphoryl-MurNAc-pentapeptide, known as lipid I. This is Phospho-N-acetylmuramoyl-pentapeptide-transferase from Erwinia tasmaniensis (strain DSM 17950 / CFBP 7177 / CIP 109463 / NCPPB 4357 / Et1/99).